The sequence spans 305 residues: UDP-3-O-acyl-N-acetylglucosamine deacetylase (305 aa).

His-78, His-237, and Asp-241 together coordinate Zn(2+). The active-site Proton donor is the His-264.

This sequence belongs to the LpxC family. The cofactor is Zn(2+).

It catalyses the reaction a UDP-3-O-[(3R)-3-hydroxyacyl]-N-acetyl-alpha-D-glucosamine + H2O = a UDP-3-O-[(3R)-3-hydroxyacyl]-alpha-D-glucosamine + acetate. Its pathway is glycolipid biosynthesis; lipid IV(A) biosynthesis; lipid IV(A) from (3R)-3-hydroxytetradecanoyl-[acyl-carrier-protein] and UDP-N-acetyl-alpha-D-glucosamine: step 2/6. Its function is as follows. Catalyzes the hydrolysis of UDP-3-O-myristoyl-N-acetylglucosamine to form UDP-3-O-myristoylglucosamine and acetate, the committed step in lipid A biosynthesis. In Burkholderia mallei (strain NCTC 10247), this protein is UDP-3-O-acyl-N-acetylglucosamine deacetylase.